Consider the following 175-residue polypeptide: ATP synthase subunit d, mitochondrial (175 aa).

Serine 2 bears the N-acetylserine mark.

This sequence belongs to the ATPase d subunit family.

The protein resides in the mitochondrion inner membrane. Mitochondrial membrane ATP synthase (F(1)F(0) ATP synthase or Complex V) produces ATP from ADP in the presence of a proton gradient across the membrane which is generated by electron transport complexes of the respiratory chain. F-type ATPases consist of two structural domains, F(1) - containing the extramembraneous catalytic core, and F(0) - containing the membrane proton channel, linked together by a central stalk and a peripheral stalk. During catalysis, ATP synthesis in the catalytic domain of F(1) is coupled via a rotary mechanism of the central stalk subunits to proton translocation. Part of the complex F(0) domain and the peripheric stalk, which acts as a stator to hold the catalytic alpha(3)beta(3) subcomplex and subunit a/ATP6 static relative to the rotary elements. In Schizosaccharomyces pombe (strain 972 / ATCC 24843) (Fission yeast), this protein is ATP synthase subunit d, mitochondrial (atp7).